Reading from the N-terminus, the 208-residue chain is Small ribosomal subunit protein uS4 (208 aa).

The region spanning 98–163 (QRLDNVVYRM…NPQITRAIEL (66 aa)) is the S4 RNA-binding domain.

It belongs to the universal ribosomal protein uS4 family. As to quaternary structure, part of the 30S ribosomal subunit. Contacts protein S5. The interaction surface between S4 and S5 is involved in control of translational fidelity.

Its function is as follows. One of the primary rRNA binding proteins, it binds directly to 16S rRNA where it nucleates assembly of the body of the 30S subunit. Functionally, with S5 and S12 plays an important role in translational accuracy. The chain is Small ribosomal subunit protein uS4 from Campylobacter jejuni subsp. jejuni serotype O:6 (strain 81116 / NCTC 11828).